The following is a 1113-amino-acid chain: StAR-related lipid transfer protein 13 (1113 aa).

Position 1 is an N-acetylmethionine (Met-1). The SAM domain maps to 55-122 (QQEIEAKEAC…LNKCASMKLD (68 aa)). 2 disordered regions span residues 162–254 (LLPR…PTRA) and 307–346 (PNGDLQNSPPPACRKGLPCSGKSSGESSPSEHSSSGVSTP). Positions 177 to 188 (MRNTTSSESVLT) are enriched in polar residues. Composition is skewed to low complexity over residues 197–213 (SIHSESSGGSDSRSQPG) and 326–344 (SGKSSGESSPSEHSSSGVS). Position 411 is a phosphoserine (Ser-411). Residues 536 to 549 (FEGNSVSEGRTTPS) are compositionally biased toward polar residues. The disordered stretch occupies residues 536–580 (FEGNSVSEGRTTPSDVERDVTSLNESEPPGVRDRRDSGVGASLTR). The Rho-GAP domain maps to 663 to 868 (VPLIVHVQRT…HMIMECDRLF (206 aa)). The START domain maps to 899–1107 (LEESGATFHT…RNSFQPLIAE (209 aa)).

Homodimer. Interacts with TAX1BP1. Ubiquitously expressed. Underexpressed in hepatocellular carcinoma cells and some breast cancer cell lines.

It localises to the cytoplasm. The protein resides in the membrane. The protein localises to the mitochondrion membrane. Its subcellular location is the lipid droplet. Functionally, GTPase-activating protein for RhoA, and perhaps for Cdc42. May be involved in regulation of cytoskeletal reorganization, cell proliferation and cell motility. Acts a tumor suppressor in hepatocellular carcinoma cells. The chain is StAR-related lipid transfer protein 13 (STARD13) from Homo sapiens (Human).